Here is a 368-residue protein sequence, read N- to C-terminus: Peptide chain release factor 2 (368 aa).

Gln250 bears the N5-methylglutamine mark.

It belongs to the prokaryotic/mitochondrial release factor family. Methylated by PrmC. Methylation increases the termination efficiency of RF2.

It localises to the cytoplasm. Its function is as follows. Peptide chain release factor 2 directs the termination of translation in response to the peptide chain termination codons UGA and UAA. The polypeptide is Peptide chain release factor 2 (Chlamydia abortus (strain DSM 27085 / S26/3) (Chlamydophila abortus)).